The chain runs to 246 residues: MKNQDVAIIIPSRLNSTRLIQKPLQLIGSITLIERVFQQVNKANIHHTYVATDSEEIANVIKKISGKVIFTDSNIPTGTDRAYEAFKLIPNNHNIHYIINVQGDIPFIEHRSILKIIEYLKNSEYDIVTPVVKVDRESIEDSSNVTVAVDYTGKALYFSRSPIPHGAEEFLYHLGIYGFRKNALEKFVSLKQTFLEKTERLEQLRILENGMTIGTCLVENVPISVDTEEDLKKAIKFCKKINKLGL.

The protein belongs to the KdsB family.

It is found in the cytoplasm. It carries out the reaction 3-deoxy-alpha-D-manno-oct-2-ulosonate + CTP = CMP-3-deoxy-beta-D-manno-octulosonate + diphosphate. It participates in nucleotide-sugar biosynthesis; CMP-3-deoxy-D-manno-octulosonate biosynthesis; CMP-3-deoxy-D-manno-octulosonate from 3-deoxy-D-manno-octulosonate and CTP: step 1/1. Its pathway is bacterial outer membrane biogenesis; lipopolysaccharide biosynthesis. In terms of biological role, activates KDO (a required 8-carbon sugar) for incorporation into bacterial lipopolysaccharide in Gram-negative bacteria. The polypeptide is 3-deoxy-manno-octulosonate cytidylyltransferase (Rickettsia prowazekii (strain Madrid E)).